The primary structure comprises 234 residues: Phosphoribosylaminoimidazole-succinocarboxamide synthase (234 aa).

This sequence belongs to the SAICAR synthetase family.

The catalysed reaction is 5-amino-1-(5-phospho-D-ribosyl)imidazole-4-carboxylate + L-aspartate + ATP = (2S)-2-[5-amino-1-(5-phospho-beta-D-ribosyl)imidazole-4-carboxamido]succinate + ADP + phosphate + 2 H(+). Its pathway is purine metabolism; IMP biosynthesis via de novo pathway; 5-amino-1-(5-phospho-D-ribosyl)imidazole-4-carboxamide from 5-amino-1-(5-phospho-D-ribosyl)imidazole-4-carboxylate: step 1/2. In Streptococcus uberis (strain ATCC BAA-854 / 0140J), this protein is Phosphoribosylaminoimidazole-succinocarboxamide synthase.